We begin with the raw amino-acid sequence, 436 residues long: tRNA (guanine(37)-N(1))-methyltransferase 1 (436 aa).

Residues His229, Asp277 to Leu278, and Asn325 contribute to the S-adenosyl-L-methionine site.

Belongs to the class I-like SAM-binding methyltransferase superfamily. TRM5/TYW2 family. As to quaternary structure, monomer.

Its subcellular location is the mitochondrion matrix. The protein resides in the nucleus. The protein localises to the cytoplasm. The catalysed reaction is guanosine(37) in tRNA + S-adenosyl-L-methionine = N(1)-methylguanosine(37) in tRNA + S-adenosyl-L-homocysteine + H(+). Specifically methylates the N1 position of guanosine-37 in various cytoplasmic and mitochondrial tRNAs. Methylation is not dependent on the nature of the nucleoside 5' of the target nucleoside. This is the first step in the biosynthesis of wybutosine (yW), a modified base adjacent to the anticodon of tRNAs and required for accurate decoding. The polypeptide is tRNA (guanine(37)-N(1))-methyltransferase 1 (Phaeodactylum tricornutum (strain CCAP 1055/1)).